The sequence spans 155 residues: Nucleoside diphosphate kinase, cytosolic (155 aa).

Lysine 16, phenylalanine 64, arginine 92, threonine 98, arginine 109, and asparagine 119 together coordinate ATP. Histidine 122 acts as the Pros-phosphohistidine intermediate in catalysis.

It belongs to the NDK family. In terms of assembly, homohexamer. It depends on Mg(2+) as a cofactor.

The protein localises to the cytoplasm. It carries out the reaction a 2'-deoxyribonucleoside 5'-diphosphate + ATP = a 2'-deoxyribonucleoside 5'-triphosphate + ADP. The catalysed reaction is a ribonucleoside 5'-diphosphate + ATP = a ribonucleoside 5'-triphosphate + ADP. In terms of biological role, major role in the synthesis of nucleoside triphosphates other than ATP. In Dictyostelium discoideum (Social amoeba), this protein is Nucleoside diphosphate kinase, cytosolic (ndkC-1).